The sequence spans 607 residues: MNLEELKKRQEKIRNFSIIAHIDHGKSTLADRILEKTETVSSREMQAQLLDSMELERERGITIKLNAIELNYTAKDGETYIFHLIDTPGHVDFTYEVSRSLAACEGAILVVDAAQGIEAQTLANVYLALDNDLEIMPIINKIDLPAADPERVRTEIEDVIGLDASEAVLASAKAGIGIEEILEQIVEKVPAPTGDVTAPLKALIFDSVYDAYRGVILQVRVMDGVVKPGDKIQLMSNSKTFDVAEVGIFTPKAVGRDFLATGDVGYIAASIKTVQDTRVGDTVTLATNPAAEPLHGYKQMNPMVFAGLYPIESNKYNDLREALEKLQLNDASLQFEPETSQALGFGFRCGFLGLLHMDVIQERLEREFNIDLIMTAPSVIYKVNLTDGESMDVSNPSEFPDPTKIATIEEPYVKAQIMVPQEFVGAVMELAQRKRGDFVTMDYIDDNRVNVIYQIPLAEIVFDFFDKLKSSTRGYASFDYELSEYRPSKLVKMDILLNGDKVDALSFIVHKDFAYERGKLIVDKLKKIIPRQQFEVPIQAAIGHKIVARTDIKALRKNVLAKCYGGDVSRKRKLLEKQKAGKKRMKSIGSVEVPQEAFLSVLSMDEE.

A tr-type G domain is found at 11–193 (EKIRNFSIIA…QIVEKVPAPT (183 aa)). GTP-binding positions include 23 to 28 (DHGKST) and 140 to 143 (NKID).

It belongs to the TRAFAC class translation factor GTPase superfamily. Classic translation factor GTPase family. LepA subfamily.

It localises to the cell membrane. The catalysed reaction is GTP + H2O = GDP + phosphate + H(+). Functionally, required for accurate and efficient protein synthesis under certain stress conditions. May act as a fidelity factor of the translation reaction, by catalyzing a one-codon backward translocation of tRNAs on improperly translocated ribosomes. Back-translocation proceeds from a post-translocation (POST) complex to a pre-translocation (PRE) complex, thus giving elongation factor G a second chance to translocate the tRNAs correctly. Binds to ribosomes in a GTP-dependent manner. The polypeptide is Elongation factor 4 (Streptococcus pneumoniae (strain P1031)).